A 359-amino-acid chain; its full sequence is Salicylate carboxymethyltransferase (359 aa).

Position 18 (tyrosine 18) interacts with S-adenosyl-L-methionine. Substrate contacts are provided by residues tyrosine 18, asparagine 21–glutamine 25, and glutamine 25. Residues glycine 59, glycine 59–cysteine 60, glycine 59–serine 61, asparagine 65, leucine 96–leucine 99, aspartate 98, serine 129–tyrosine 131, and serine 146–serine 148 each bind S-adenosyl-L-methionine. Residues tyrosine 147–tryptophan 151 and tryptophan 151 contribute to the substrate site. Mg(2+) contacts are provided by asparagine 162, aspartate 248, phenylalanine 250, and asparagine 251. Residue tyrosine 255 participates in substrate binding.

This sequence belongs to the methyltransferase superfamily. SABATH family.

The enzyme catalyses salicylate + S-adenosyl-L-methionine = methyl salicylate + S-adenosyl-L-homocysteine. In terms of biological role, catalyzes the methylation of the free carboxyl end of the plant hormone salicylic acid (SA). Converts SA to SA methyl ester (MSA). The volatile compound MSA is hypothesized to act as an airborne signal that triggers defense responses in uninfected plants. MSA is an important chemoattractant for moth pollinated flowering plants. The polypeptide is Salicylate carboxymethyltransferase (SAMT) (Clarkia breweri (Fairy fans)).